The following is a 176-amino-acid chain: Large ribosomal subunit protein uL10 (176 aa).

The protein belongs to the universal ribosomal protein uL10 family. In terms of assembly, part of the ribosomal stalk of the 50S ribosomal subunit. The N-terminus interacts with L11 and the large rRNA to form the base of the stalk. The C-terminus forms an elongated spine to which L12 dimers bind in a sequential fashion forming a multimeric L10(L12)X complex.

In terms of biological role, forms part of the ribosomal stalk, playing a central role in the interaction of the ribosome with GTP-bound translation factors. This chain is Large ribosomal subunit protein uL10, found in Acaryochloris marina (strain MBIC 11017).